The sequence spans 432 residues: Type I restriction enzyme MjaIX specificity subunit (432 aa).

It belongs to the type-I restriction system S methylase family. The type I restriction/modification system is composed of three polypeptides R, M and S.

Functionally, the specificity (S) subunit of a type I restriction enzyme; this subunit dictates DNA sequence specificity. The M and S subunits together form a methyltransferase (MTase) that methylates A-3 on the top and A-2 on the bottom strand of the sequence 5'-CCAN(5)GTR-3'. In the presence of the R subunit the complex can also act as an endonuclease, binding to the same target sequence but cutting the DNA some distance from this site. Whether the DNA is cut or modified depends on the methylation state of the target sequence. When the target site is unmodified, the DNA is cut. When the target site is hemimethylated, the complex acts as a maintenance MTase modifying the DNA so that both strands become methylated. After locating a non-methylated recognition site, the enzyme complex serves as a molecular motor that translocates DNA in an ATP-dependent manner until a collision occurs that triggers cleavage. This is Type I restriction enzyme MjaIX specificity subunit (hsdS) from Methanocaldococcus jannaschii (strain ATCC 43067 / DSM 2661 / JAL-1 / JCM 10045 / NBRC 100440) (Methanococcus jannaschii).